The sequence spans 349 residues: UDP-3-O-acylglucosamine N-acyltransferase (349 aa).

The active-site Proton acceptor is the His-246.

It belongs to the transferase hexapeptide repeat family. LpxD subfamily. In terms of assembly, homotrimer.

It catalyses the reaction a UDP-3-O-[(3R)-3-hydroxyacyl]-alpha-D-glucosamine + a (3R)-hydroxyacyl-[ACP] = a UDP-2-N,3-O-bis[(3R)-3-hydroxyacyl]-alpha-D-glucosamine + holo-[ACP] + H(+). It participates in bacterial outer membrane biogenesis; LPS lipid A biosynthesis. Functionally, catalyzes the N-acylation of UDP-3-O-acylglucosamine using 3-hydroxyacyl-ACP as the acyl donor. Is involved in the biosynthesis of lipid A, a phosphorylated glycolipid that anchors the lipopolysaccharide to the outer membrane of the cell. This Nostoc sp. (strain PCC 7120 / SAG 25.82 / UTEX 2576) protein is UDP-3-O-acylglucosamine N-acyltransferase.